Here is a 294-residue protein sequence, read N- to C-terminus: Cytidine deaminase (294 aa).

2 consecutive CMP/dCMP-type deaminase domains span residues 48–168 and 186–294; these read DEDA…FGPK and LTGD…VLLA. 89-91 serves as a coordination point for substrate; the sequence is NME. H102 is a binding site for Zn(2+). E104 acts as the Proton donor in catalysis. Zn(2+) is bound by residues C129 and C132.

Belongs to the cytidine and deoxycytidylate deaminase family. Homodimer. The cofactor is Zn(2+).

The enzyme catalyses cytidine + H2O + H(+) = uridine + NH4(+). The catalysed reaction is 2'-deoxycytidine + H2O + H(+) = 2'-deoxyuridine + NH4(+). Functionally, this enzyme scavenges exogenous and endogenous cytidine and 2'-deoxycytidine for UMP synthesis. The protein is Cytidine deaminase of Escherichia coli O157:H7.